Consider the following 614-residue polypeptide: Phosphomethylpyrimidine synthase (614 aa).

Over residues 1–16 the composition is skewed to low complexity; that stretch reads MNAQLSALQQQAQQLS. The disordered stretch occupies residues 1 to 36; sequence MNAQLSALQQQAQQLSESVTRPIPGSRKIHVPGSRP. Substrate is bound by residues N230, M259, Y288, H324, 344–346, 385–388, and E424; these read SRG and DGLR. H428 contacts Zn(2+). Y451 is a substrate binding site. H492 contributes to the Zn(2+) binding site. [4Fe-4S] cluster is bound by residues C572, C575, and C580.

It belongs to the ThiC family. As to quaternary structure, homodimer. It depends on [4Fe-4S] cluster as a cofactor.

It catalyses the reaction 5-amino-1-(5-phospho-beta-D-ribosyl)imidazole + S-adenosyl-L-methionine = 4-amino-2-methyl-5-(phosphooxymethyl)pyrimidine + CO + 5'-deoxyadenosine + formate + L-methionine + 3 H(+). It functions in the pathway cofactor biosynthesis; thiamine diphosphate biosynthesis. Catalyzes the synthesis of the hydroxymethylpyrimidine phosphate (HMP-P) moiety of thiamine from aminoimidazole ribotide (AIR) in a radical S-adenosyl-L-methionine (SAM)-dependent reaction. The sequence is that of Phosphomethylpyrimidine synthase from Stenotrophomonas maltophilia (strain R551-3).